The chain runs to 276 residues: Odontogenic ameloblast-associated protein (276 aa).

An N-terminal signal peptide occupies residues 1-15 (MRTLILLGILGATMS). Residues T101, T113, and T117 are each glycosylated (O-linked (GalNAc...) threonine). Positions 125–127 (MPS) are interaction with ARHGEF5. S246 carries an O-linked (GalNAc...) serine glycan. T247, T248, and T252 each carry an O-linked (GalNAc...) threonine glycan. S253 is a glycosylation site (O-linked (GalNAc...) serine). Residues T254, T258, T260, and T270 are each glycosylated (O-linked (GalNAc...) threonine). A glycan (O-linked (GalNAc...) serine) is linked at S272.

This sequence belongs to the ODAM family. As to quaternary structure, interacts (via C-terminus) with ARHGEF5. In terms of processing, O-glycosylated.

It localises to the secreted. The protein resides in the cytoplasm. It is found in the nucleus. Tooth-associated epithelia protein that probably plays a role in odontogenesis, the complex process that results in the initiation and generation of the tooth. May be incorporated in the enamel matrix at the end of mineralization process. Involved in the induction of RHOA activity via interaction with ARHGEF and expression of downstream factors such as ROCK. Plays a role in attachment of the junctional epithelium to the tooth surface. In Sus scrofa (Pig), this protein is Odontogenic ameloblast-associated protein (ODAM).